We begin with the raw amino-acid sequence, 399 residues long: 1-deoxy-D-xylulose 5-phosphate reductoisomerase (399 aa).

T11, G12, S13, I14, and N125 together coordinate NADPH. K126 contacts 1-deoxy-D-xylulose 5-phosphate. E127 contributes to the NADPH binding site. Position 151 (D151) interacts with Mn(2+). S152, E153, S186, and H209 together coordinate 1-deoxy-D-xylulose 5-phosphate. Residue E153 coordinates Mn(2+). NADPH is bound at residue G215. Residues S222, N227, K228, and E231 each contribute to the 1-deoxy-D-xylulose 5-phosphate site. Mn(2+) is bound at residue E231.

The protein belongs to the DXR family. It depends on Mg(2+) as a cofactor. The cofactor is Mn(2+).

The catalysed reaction is 2-C-methyl-D-erythritol 4-phosphate + NADP(+) = 1-deoxy-D-xylulose 5-phosphate + NADPH + H(+). It participates in isoprenoid biosynthesis; isopentenyl diphosphate biosynthesis via DXP pathway; isopentenyl diphosphate from 1-deoxy-D-xylulose 5-phosphate: step 1/6. Its function is as follows. Catalyzes the NADPH-dependent rearrangement and reduction of 1-deoxy-D-xylulose-5-phosphate (DXP) to 2-C-methyl-D-erythritol 4-phosphate (MEP). The chain is 1-deoxy-D-xylulose 5-phosphate reductoisomerase from Acinetobacter baumannii (strain SDF).